The sequence spans 771 residues: MATLQDIGVSAGINILSAFVFFIIFAVLRLQPFNDRVYFSKWYLKGLRSSPARGGAFAQRFVNLDFRSYMKFLNWMPEALKMPEPELIDHAGLDSVVYLRIYWLGLKIFTPIAVLAWAVLVPVNWTNNTLEMAKQLRNVTSSDIDKLSVSNIPEYSMRFWTHIVMAYAFTIWTCYVLMKEYETIANMRLQFVASEARRPDQFTVLVRNVPPDADESVSELVEHFFLVNHPDHYLTHQVVCNANKLADLVKKKKKLQNWLDYYQLKYARNNSQRIMVKLGFLGLWGQKVDAIEHYIAEIDKISKEISKEREEVVNDPKAIMPAAFVSFKTRWAAAVCAQTQQTRNPTQWLTEWAPEPRDVFWSNLAIPYVSLTVRRLIMHVAFFFLTFFFIVPIAFVQSLATIEGIVKAAPFLKFIVDDKFMKSVIQGFLPGIALKLFLAFLPSILMIMSKFEGFTSISSLERRAAFRYYIFNLVNVFLASVIAGAAFEQLNSFLNQSANQIPKTIGVAIPMKATFFITYIMVDGWAGVAGEILMLKPLIMFHLKNAFLVKTDKDREEAMDPGSIGFNTGEPRIQLYFLLGLVYAPVTPMLLPFILVFFALAYIVYRHQIINVYNQEYESAAAFWPDVHGRVIAALVISQLLLMGLLGTKHAALAAPFLIALPVLTIGFHHFCKGRYEPAFIRYPLQEAMMKDTLETAREPNLNLKGYLQNAYVHPVFKGDEDDYDIDDKLGKFEDEAIIVPTKRQSRRNTPAPSIISGDDSPSLPFSGKLV.

The Extracellular portion of the chain corresponds to 1 to 4; it reads MATL. Residues 5 to 27 traverse the membrane as a helical segment; it reads QDIGVSAGINILSAFVFFIIFAV. At 28 to 100 the chain is on the cytoplasmic side; sequence LRLQPFNDRV…AGLDSVVYLR (73 aa). A helical transmembrane segment spans residues 101-125; it reads IYWLGLKIFTPIAVLAWAVLVPVNW. At 126–156 the chain is on the extracellular side; it reads TNNTLEMAKQLRNVTSSDIDKLSVSNIPEYS. Residues 157 to 178 form a helical membrane-spanning segment; it reads MRFWTHIVMAYAFTIWTCYVLM. Residues 179–374 lie on the Cytoplasmic side of the membrane; it reads KEYETIANMR…AIPYVSLTVR (196 aa). The chain crosses the membrane as a helical span at residues 375–401; sequence RLIMHVAFFFLTFFFIVPIAFVQSLAT. The Extracellular segment spans residues 402–419; that stretch reads IEGIVKAAPFLKFIVDDK. The helical transmembrane segment at 420–445 threads the bilayer; that stretch reads FMKSVIQGFLPGIALKLFLAFLPSIL. The Cytoplasmic portion of the chain corresponds to 446 to 462; it reads MIMSKFEGFTSISSLER. The helical transmembrane segment at 463-485 threads the bilayer; that stretch reads RAAFRYYIFNLVNVFLASVIAGA. At 486–504 the chain is on the extracellular side; the sequence is AFEQLNSFLNQSANQIPKT. The chain crosses the membrane as a helical span at residues 505 to 533; it reads IGVAIPMKATFFITYIMVDGWAGVAGEIL. Topologically, residues 534–566 are cytoplasmic; that stretch reads MLKPLIMFHLKNAFLVKTDKDREEAMDPGSIGF. A helical transmembrane segment spans residues 567-588; that stretch reads NTGEPRIQLYFLLGLVYAPVTP. Residue methionine 589 is a topological domain, extracellular. The helical transmembrane segment at 590–605 threads the bilayer; that stretch reads LLPFILVFFALAYIVY. The Cytoplasmic portion of the chain corresponds to 606–625; that stretch reads RHQIINVYNQEYESAAAFWP. The helical transmembrane segment at 626–648 threads the bilayer; that stretch reads DVHGRVIAALVISQLLLMGLLGT. Over 649-651 the chain is Extracellular; that stretch reads KHA. Residues 652-670 form a helical membrane-spanning segment; it reads ALAAPFLIALPVLTIGFHH. The Cytoplasmic segment spans residues 671–771; it reads FCKGRYEPAF…PSLPFSGKLV (101 aa). Residues 741-771 are disordered; the sequence is PTKRQSRRNTPAPSIISGDDSPSLPFSGKLV.

Belongs to the CSC1 (TC 1.A.17) family. Homodimer.

It localises to the membrane. Its activity is regulated as follows. Activated by hyperosmotic shock after mannitol or NaCl treatment. Activated by mechanical pressure: activated in response to membrane stretch and poke. Membrane lipids play a key role in mechanosensation by acting as a wall mainly formed by lipid head groups. Acts as an osmosensitive calcium-permeable cation channel. Specifically conducts cations including Ca(2+), K(+) and Na(+) in vitro. Inactivation or closure of the channel is calcium-dependent. Mechanosensitive ion channel that converts mechanical stimuli into a flow of ions: activated in response to membrane stretch and poke. The protein is Hyperosmolality-gated Ca2+ permeable channel 1.2 of Arabidopsis thaliana (Mouse-ear cress).